The primary structure comprises 361 residues: Holliday junction branch migration complex subunit RuvB (361 aa).

The large ATPase domain (RuvB-L) stretch occupies residues 1–183; that stretch reads MAEPSLVAAG…FGFTGHLEFY (183 aa). ATP is bound by residues leucine 22, arginine 23, glycine 64, lysine 67, threonine 68, threonine 69, 130-132, arginine 173, tyrosine 183, and arginine 220; that span reads EDF. Position 68 (threonine 68) interacts with Mg(2+). The tract at residues 184–254 is small ATPAse domain (RuvB-S); sequence SVPELELVLR…SASAALDMYE (71 aa). Residues 257-361 are head domain (RuvB-H); the sequence is KKGLDRLDRS…VTGEWAPESQ (105 aa). The DNA site is built by arginine 312 and arginine 317.

This sequence belongs to the RuvB family. As to quaternary structure, homohexamer. Forms an RuvA(8)-RuvB(12)-Holliday junction (HJ) complex. HJ DNA is sandwiched between 2 RuvA tetramers; dsDNA enters through RuvA and exits via RuvB. An RuvB hexamer assembles on each DNA strand where it exits the tetramer. Each RuvB hexamer is contacted by two RuvA subunits (via domain III) on 2 adjacent RuvB subunits; this complex drives branch migration. In the full resolvosome a probable DNA-RuvA(4)-RuvB(12)-RuvC(2) complex forms which resolves the HJ.

It is found in the cytoplasm. It catalyses the reaction ATP + H2O = ADP + phosphate + H(+). In terms of biological role, the RuvA-RuvB-RuvC complex processes Holliday junction (HJ) DNA during genetic recombination and DNA repair, while the RuvA-RuvB complex plays an important role in the rescue of blocked DNA replication forks via replication fork reversal (RFR). RuvA specifically binds to HJ cruciform DNA, conferring on it an open structure. The RuvB hexamer acts as an ATP-dependent pump, pulling dsDNA into and through the RuvAB complex. RuvB forms 2 homohexamers on either side of HJ DNA bound by 1 or 2 RuvA tetramers; 4 subunits per hexamer contact DNA at a time. Coordinated motions by a converter formed by DNA-disengaged RuvB subunits stimulates ATP hydrolysis and nucleotide exchange. Immobilization of the converter enables RuvB to convert the ATP-contained energy into a lever motion, pulling 2 nucleotides of DNA out of the RuvA tetramer per ATP hydrolyzed, thus driving DNA branch migration. The RuvB motors rotate together with the DNA substrate, which together with the progressing nucleotide cycle form the mechanistic basis for DNA recombination by continuous HJ branch migration. Branch migration allows RuvC to scan DNA until it finds its consensus sequence, where it cleaves and resolves cruciform DNA. In Pseudarthrobacter chlorophenolicus (strain ATCC 700700 / DSM 12829 / CIP 107037 / JCM 12360 / KCTC 9906 / NCIMB 13794 / A6) (Arthrobacter chlorophenolicus), this protein is Holliday junction branch migration complex subunit RuvB.